We begin with the raw amino-acid sequence, 529 residues long: Ell-associated factor Eaf (529 aa).

Disordered regions lie at residues 155 to 235 (AAGS…PMIT) and 253 to 529 (ANIS…DDDD). Residues 167 to 186 (ENSTMRISSKTKVSTGSRRN) show a composition bias toward polar residues. Low complexity-rich tracts occupy residues 194–215 (RNSPMQQSSPSRPVVSHRSPQS), 256–265 (SGSSTGSSSG), 306–315 (HQNQQQQQQN), and 327–346 (QQQHQQQMQQQQQQHQQQQQ). The residue at position 196 (Ser196) is a Phosphoserine. The segment covering 347–359 (RASFSHSNHSNSM) has biased composition (polar residues). Residues 401 to 416 (DSSDTDSGSDSDDSTD) are compositionally biased toward acidic residues. 4 stretches are compositionally biased toward low complexity: residues 431 to 451 (HQQQHHQMQQQHQQQQQHMHQ), 469 to 480 (QHQQQQQQPPQQ), 488 to 499 (QQQQQQQQQQQS), and 510 to 523 (NDLLQNDLQLSSNS).

Belongs to the EAF family.

It localises to the nucleus. Functionally, promotes transcriptional elongation by Su(Tpl)/ELL. Essential for development. The polypeptide is Ell-associated factor Eaf (Drosophila grimshawi (Hawaiian fruit fly)).